Reading from the N-terminus, the 319-residue chain is MSLNFLEFEKPIAELEAKIEALRDVSRHGGDSAIDLDKEIEQLEKKSLELKKKIFSDLGAWETAQLARHPLRPYTLDYVQHVFEEFDELAGDRAFADDKAIVGGIARLEGRPVMIIGHQKGRETKEKVRRNFGMPKPEGYRKALRLMEMAERFNMPIITFIDTAGAYPGVGAEERGQSEAIAKNLKVMSGLKVPVICNVVGEGGSGGALAIGVGDYVNMLQYSTYSVISPEGCASILWRDSDKAPQAAEAMGLTAPRLKELELIDEIIEEPLGGAHRDHVKMAENMKATLLRQLEDLEQLDEESLRERRYQRLMNYGYC.

A CoA carboxyltransferase C-terminal domain is found at 35 to 296 (DLDKEIEQLE…KATLLRQLED (262 aa)).

This sequence belongs to the AccA family. As to quaternary structure, acetyl-CoA carboxylase is a heterohexamer composed of biotin carboxyl carrier protein (AccB), biotin carboxylase (AccC) and two subunits each of ACCase subunit alpha (AccA) and ACCase subunit beta (AccD).

It is found in the cytoplasm. The enzyme catalyses N(6)-carboxybiotinyl-L-lysyl-[protein] + acetyl-CoA = N(6)-biotinyl-L-lysyl-[protein] + malonyl-CoA. Its pathway is lipid metabolism; malonyl-CoA biosynthesis; malonyl-CoA from acetyl-CoA: step 1/1. Functionally, component of the acetyl coenzyme A carboxylase (ACC) complex. First, biotin carboxylase catalyzes the carboxylation of biotin on its carrier protein (BCCP) and then the CO(2) group is transferred by the carboxyltransferase to acetyl-CoA to form malonyl-CoA. The sequence is that of Acetyl-coenzyme A carboxylase carboxyl transferase subunit alpha from Vibrio parahaemolyticus serotype O3:K6 (strain RIMD 2210633).